The primary structure comprises 153 residues: Superoxide dismutase [Cu-Zn] (153 aa).

Residues His-45, His-47, and His-62 each coordinate Cu cation. Cys-56 and Cys-145 are oxidised to a cystine. Residues His-62, His-70, His-79, and Asp-82 each coordinate Zn(2+). His-119 provides a ligand contact to Cu cation.

Belongs to the Cu-Zn superoxide dismutase family. Homodimer. Cu cation is required as a cofactor. Requires Zn(2+) as cofactor.

The protein localises to the cytoplasm. It catalyses the reaction 2 superoxide + 2 H(+) = H2O2 + O2. Its function is as follows. Destroys radicals which are normally produced within the cells and which are toxic to biological systems. The protein is Superoxide dismutase [Cu-Zn] (SOD) of Schistosoma mansoni (Blood fluke).